A 577-amino-acid chain; its full sequence is Chaperonin CPN60, mitochondrial (577 aa).

A mitochondrion-targeting transit peptide spans 1–31 (MYRFASNLASKARIAQNARQVSSRMSWSRNY). At serine 151 the chain carries Phosphoserine.

The protein belongs to the chaperonin (HSP60) family.

It localises to the mitochondrion. Its function is as follows. Implicated in mitochondrial protein import and macromolecular assembly. May facilitate the correct folding of imported proteins. May also prevent misfolding and promote the refolding and proper assembly of unfolded polypeptides generated under stress conditions in the mitochondrial matrix. This chain is Chaperonin CPN60, mitochondrial (CPN60), found in Arabidopsis thaliana (Mouse-ear cress).